A 221-amino-acid chain; its full sequence is Oligoribonuclease (221 aa).

One can recognise an Exonuclease domain in the interval 21-186 (LVWVDLEMTG…ADIVESIREL (166 aa)). Tyrosine 143 is a catalytic residue.

It belongs to the oligoribonuclease family.

Its subcellular location is the cytoplasm. Its function is as follows. 3'-to-5' exoribonuclease specific for small oligoribonucleotides. This is Oligoribonuclease from Corynebacterium efficiens (strain DSM 44549 / YS-314 / AJ 12310 / JCM 11189 / NBRC 100395).